A 279-amino-acid polypeptide reads, in one-letter code: Tryptophan 2,3-dioxygenase (279 aa).

Substrate-binding positions include 48-52 (FIVIH), Y110, and R114. H237 serves as a coordination point for heme. T251 is a binding site for substrate.

It belongs to the tryptophan 2,3-dioxygenase family. In terms of assembly, homotetramer. Heme is required as a cofactor.

The enzyme catalyses L-tryptophan + O2 = N-formyl-L-kynurenine. It functions in the pathway amino-acid degradation; L-tryptophan degradation via kynurenine pathway; L-kynurenine from L-tryptophan: step 1/2. Heme-dependent dioxygenase that catalyzes the oxidative cleavage of the L-tryptophan (L-Trp) pyrrole ring and converts L-tryptophan to N-formyl-L-kynurenine. Catalyzes the oxidative cleavage of the indole moiety. The chain is Tryptophan 2,3-dioxygenase from Exiguobacterium sibiricum (strain DSM 17290 / CCUG 55495 / CIP 109462 / JCM 13490 / 255-15).